An 84-amino-acid polypeptide reads, in one-letter code: Kunitz-type serine protease inhibitor 1 (84 aa).

Positions 1-24 (MSSGGLLLLLGLLTLWAELTPISG) are cleaved as a signal peptide. The BPTI/Kunitz inhibitor domain maps to 31–81 (CNLAPESGRCRGHLRRIYYNLESNKCKVFFYGGCGGNANNFETRDECRQTC). Intrachain disulfides connect C31/C81, C40/C64, and C56/C77.

This sequence belongs to the venom Kunitz-type family. In terms of tissue distribution, expressed by the venom gland.

The protein resides in the secreted. Serine protease inhibitor. This Daboia russelii (Russel's viper) protein is Kunitz-type serine protease inhibitor 1.